Here is a 495-residue protein sequence, read N- to C-terminus: Bile acid-sensitive ion channel (495 aa).

The interval 1–30 is binds the plasma membrane and stabilizes the channel in the closed state; sequence MEHTEKSQVHAEKGLLGKIKRYLSKRPLPS. Residues 1 to 61 lie on the Cytoplasmic side of the membrane; it reads MEHTEKSQVH…NIAQNQNKVR (61 aa). The helical transmembrane segment at 62-82 threads the bilayer; sequence KVIWLAVVLGSVSLLVWQIYS. Topologically, residues 83–459 are extracellular; that stretch reads RLVNYFTWPT…GLFCGASLIT (377 aa). 6 disulfide bridges follow: Cys112-Cys207, Cys185-Cys192, Cys298-Cys377, Cys315-Cys373, Cys328-Cys350, and Cys330-Cys342. N-linked (GlcNAc...) asparagine glycosylation is found at Asn147, Asn163, and Asn179. Residues Asn370, Asn405, and Asn421 are each glycosylated (N-linked (GlcNAc...) asparagine). Positions 454 to 456 match the GAS motif; ion selectivity filter motif; that stretch reads GAS. The helical transmembrane segment at 460 to 480 threads the bilayer; the sequence is IIEIIEYFFTNFYWVLIFFLL. The Cytoplasmic portion of the chain corresponds to 481–495; that stretch reads KILETIQRTSPPQAV.

The protein belongs to the amiloride-sensitive sodium channel (TC 1.A.6) family. ASIC5 subfamily. Forms homotrimeric channels. As to expression, expressed by cholangiocytes (at protein level). Detected in cerebellum, brainstem, kidney, liver, hepatocytes, lung, intestine and embryo. In the cerebellum, restricted to interneurons in the granular layer, specifically in GRM1-expressing unipolar brush cells of the vestibulocerebellum.

It is found in the apical cell membrane. It localises to the cell membrane. The catalysed reaction is Na(+)(in) = Na(+)(out). It catalyses the reaction Li(+)(in) = Li(+)(out). The enzyme catalyses K(+)(in) = K(+)(out). It carries out the reaction H(+)(in) = H(+)(out). Its activity is regulated as follows. Inhibited by the diuretic drug amiloride. Contrary to its rat ortholog it is not inhibited by Ca(2+). Functionally, forms bile acid-gated sodium channels and may play a role in bile acid-dependent absorption and secretion by epithelial cells of the bile ducts. Displays high selectivity for sodium ions but can also permit the permeation of other cations. The gating could be indirect and the consequence of alterations of the membrane environment of the channel by bile acids. As a sodium channel of type II unipolar brush cells of the vestibulocerebellum, controlling the electrical activity of these cells, could play a role in motor coordination and balance. The chain is Bile acid-sensitive ion channel from Mus musculus (Mouse).